The chain runs to 586 residues: Malonate--CoA ligase ACSF3, mitochondrial (586 aa).

The transit peptide at methionine 1–cysteine 89 directs the protein to the mitochondrion. ATP is bound by residues threonine 203–lysine 211, aspartate 457, arginine 471, and lysine 563.

It belongs to the ATP-dependent AMP-binding enzyme family.

The protein localises to the mitochondrion. It catalyses the reaction tetracosanoate + ATP + CoA = tetracosanoyl-CoA + AMP + diphosphate. The enzyme catalyses malonate + ATP + CoA = malonyl-CoA + AMP + diphosphate. Catalyzes the initial reaction in intramitochondrial fatty acid synthesis, by activating malonate and methylmalonate, but not acetate, into their respective CoA thioester. May have some preference toward very-long-chain substrates. This is Malonate--CoA ligase ACSF3, mitochondrial from Bos taurus (Bovine).